Reading from the N-terminus, the 1088-residue chain is RNA-directed RNA polymerase (1088 aa).

The 187-residue stretch at 501–687 (LSYGDVTRFL…AKRYIAGGKI (187 aa)) folds into the RdRp catalytic domain.

The protein belongs to the reoviridae RNA-directed RNA polymerase family. Interacts with VP3 (Potential). Interacts with VP2; this interaction activates VP1. Interacts with NSP5; this interaction is probably necessary for the formation of functional virus factories. Interacts with NSP2; this interaction is weak. Requires Mg(2+) as cofactor.

The protein localises to the virion. The catalysed reaction is RNA(n) + a ribonucleoside 5'-triphosphate = RNA(n+1) + diphosphate. RNA-directed RNA polymerase that is involved in both transcription and genome replication. Together with VP3 capping enzyme, forms an enzyme complex positioned near the channels situated at each of the five-fold vertices of the core. Following infection, the outermost layer of the virus is lost, leaving a double-layered particle (DLP) made up of the core and VP6 shell. VP1 then catalyzes the transcription of fully conservative plus-strand genomic RNAs that are extruded through the DLP's channels into the cytoplasm where they function as mRNAs for translation of viral proteins. One copy of each of the viral (+)RNAs is also recruited during core assembly, together with newly synthesized polymerase complexes and VP2. The polymerase of these novo-formed particles catalyzes the synthesis of complementary minus-strands leading to dsRNA formation. To do so, the polymerase specifically recognizes and binds 4 bases 5'-UGUG-3' in the conserved 3'-sequence of plus-strand RNA templates. VP2 presumably activates the autoinhibited VP1-RNA complex to coordinate packaging and genome replication. Once dsRNA synthesis is complete, the polymerase switches to the transcriptional mode, thus providing secondary transcription. The chain is RNA-directed RNA polymerase from Chlorocebus pygerythrus (Vervet monkey).